Consider the following 602-residue polypeptide: Multidrug and toxin extrusion protein 2 (602 aa).

Residues 1-33 (MDSLQDTVALDHGGCCPALSRLVPRGFGTEMWT) are Cytoplasmic-facing. Residues 34 to 54 (LFALSGPLFLFQVLTFMIYIV) traverse the membrane as a helical segment. At 55–66 (STVFCGHLGKVE) the chain is on the extracellular side. A helical membrane pass occupies residues 67 to 87 (LASVTLAVAFVNVCGVSVGVG). Topologically, residues 88–119 (LSSACDTLMSQSFGSPNKKHVGVILQRGALVL) are cytoplasmic. A helical membrane pass occupies residues 120 to 140 (LLCCLPCWALFLNTQHILLLF). Over 141-153 (RQDPDVSRLTQDY) the chain is Extracellular. The chain crosses the membrane as a helical span at residues 154–174 (VMIFIPGLPVIFLYNLLAKYL). Residues 175 to 219 (QNQGWLKGQEEESPFQTPGLSILHPSHSHLSRASFHLFQKITWPQ) lie on the Cytoplasmic side of the membrane. The chain crosses the membrane as a helical span at residues 220–240 (VLSGVVGNCVNGVANYALVSV). Residues 241 to 248 (LNLGVRGS) are Extracellular-facing. Residues 249–269 (AYANIISQFAQTVFLLLYIVL) form a helical membrane-spanning segment. Topologically, residues 270–289 (KKLHLETWAGWSSQCLQDWG) are cytoplasmic. Residues 290 to 309 (PFFSLAVPSMLMICVEWWAY) traverse the membrane as a helical segment. Over 310–327 (EIGSFLMGLLSVVDLSAQ) the chain is Extracellular. A helical transmembrane segment spans residues 328–348 (AVIYEVATVTYMIPLGLSIGV). At 349–368 (CVRVGMALGAADTVQAKRSA) the chain is on the cytoplasmic side. A helical membrane pass occupies residues 369–389 (VSGVLSIVGISLVLGTLISIL). The Extracellular portion of the chain corresponds to 390–402 (KNQLGHIFTNDED). A helical transmembrane segment spans residues 403-423 (VIALVSQVLPVYSVFHVFEAI). The Cytoplasmic portion of the chain corresponds to 424–442 (CCVYGGVLRGTGKQAFGAA). A helical membrane pass occupies residues 443–463 (VNAITYYIIGLPLGILLTFVV). The Extracellular portion of the chain corresponds to 464–466 (RMR). The chain crosses the membrane as a helical span at residues 467 to 487 (IMGLWLGMLACVFLATAAFVA). At 488–578 (YTARLDWKLA…LSVKQLVIRR (91 aa)) the chain is on the cytoplasmic side. The interval 503–529 (KHSGRQQQQRAESTATRPGPEKAVLSS) is disordered. Polar residues predominate over residues 507–518 (RQQQQRAESTAT). The chain crosses the membrane as a helical span at residues 579 to 599 (GAALGAASATLMVGLTVRILA). Residues 600–602 (TRH) are Extracellular-facing.

This sequence belongs to the multi antimicrobial extrusion (MATE) (TC 2.A.66.1) family. In terms of tissue distribution, high expression in kidney. Very small expression in adrenal gland and lung. As to expression, high expression in kidney. Very small expression in brain and testis. Ubiquitously expressed in all tissues examined except the kidney.

The protein resides in the cell membrane. It localises to the apical cell membrane. It catalyses the reaction thiamine(out) + H(+)(in) = thiamine(in) + H(+)(out). It carries out the reaction estrone 3-sulfate(in) + H(+)(out) = estrone 3-sulfate(out) + H(+)(in). The catalysed reaction is creatinine(in) + H(+)(out) = creatinine(out) + H(+)(in). Functionally, multidrug efflux pump that functions as a H(+)/organic cation antiporter. Mediates the efflux of cationic compounds, such as the model cations, tetraethylammonium (TEA) and 1-methyl-4-phenylpyridinium (MPP+), the platinum-based drug oxaliplatin or weak bases that are positively charged at physiological pH, cimetidine, the platinum-based drugs cisplatin and oxaliplatin or the antidiabetic drug metformin. Mediates the efflux of endogenous compounds such as, creatinine, thiamine and estrone-3-sulfate. Plays a physiological role in the excretion of drugs, toxins and endogenous metabolites through the kidney. Non-functional protein. This Homo sapiens (Human) protein is Multidrug and toxin extrusion protein 2.